The primary structure comprises 1048 residues: MENQHQKFISRRNFIKTSALLGGTAFLGTGLPNIKKTYSKELDYVGNFEYPLAKPENILYSACLQCTVACSIKVKINNGVCMKIDGNPYSAMNLGENLPYDLSPKEAVSIDGKLCPKGQAGIQHAYDPYRLRKVIKRDGPRGSGKWKTIPYDQAIDEIVNGGNIFKDIGENQNVEGLKDIFVLKDPKVAKAMADDVTKIRKKEMTVDEFKAKHKDNLDVLIDPNHPDLGPKNNQFLFQVGRIHNGRIEFTKRFVNDSFGSVNWIEKTTLCGQTSNKAWVHSTREYLEGKWTGGIKSPRPDHRNTEFLLVFGSIVFEANYGPVQETEPITEGLESGRLKIAVVDPRLTKVASKAWKWVPIKPGNDAAFALGMIRWIIENERYDTKFLQNATRLAATNSDEPSYSNATYLVKVEKDGRAAKHLRANEIGIGTEKEFVVISNGKPAAVDPENSNLAIQGELFVDTNLEGIKVKSPLQLIKEEAYSKELAEWAELSGAKQKDIEDISKEFTSHGKKAAVEFYRGAIKHTNGWYNGQALIVLNHLIGNMNWQGGISNTGGGWSYIGDKEGQPYPMANLHPNKLSKFGVPITKEGWKYEESTLFEGYPAKRPWYPFSGNVAQETWPSISDGYPYKIKAALISSHSPMYSLPGGHVQLKTLLDTEKVPLLIASDIVIGDSSQYVDYIFPDLTYLERWATPGQSHHIRVKVNQVRQPVIAPLTENATVFGEEVPISLEALMMSISEKVGLSGFGKDAFGPGKDLNRMEDFYLKLVANIASGNKQGELVKAADSEEMELFKSSHRHLPKTVYDIEKWQQTLTSDEWKRVVYVLNRGGRFASSDDAYEGSFIKKKIPGLARLYLEEIADSRNSISGNYFTGYPKYLPIMDMAENLINDEGEFHLITNKEVFGTQSRTITNYWAQLALQPENFVVLNSVDAKKLKVDNGDKVLVTSTSNPKGEHLIAADESRPTIGKVKIVEGIRPGVVAISTHYGHWGYGARDIQIDGEVVKGEEVRGLGIHPNPLFRLDDNLRGTTLSDPIGGSASYYDTRVNIQRV.

The tat-type signal signal peptide spans 1-39; the sequence is MENQHQKFISRRNFIKTSALLGGTAFLGTGLPNIKKTYS. A 4Fe-4S Mo/W bis-MGD-type domain is found at 56–129; that stretch reads ENILYSACLQ…AGIQHAYDPY (74 aa). C63, C66, C70, and C115 together coordinate [4Fe-4S] cluster. C270 contributes to the Mo-bis(molybdopterin guanine dinucleotide) binding site.

This sequence belongs to the prokaryotic molybdopterin-containing oxidoreductase family. As to quaternary structure, the complex is composed of three subunits: SrdA, SrdB and SrdC. The cofactor is [4Fe-4S] cluster. It depends on Mo-bis(molybdopterin guanine dinucleotide) as a cofactor. Predicted to be exported by the Tat system. The position of the signal peptide cleavage has not been experimentally proven.

It is found in the secreted. The catalysed reaction is selenite + a quinone + H2O = selenate + a quinol. Its function is as follows. Component of the respiratory selenate reductase complex, which catalyzes the reduction of selenate to selenite. SrdA is probably the catalytic subunit that reduces selenate. The polypeptide is Selenate reductase subunit A (Mesobacillus selenatarsenatis (strain DSM 18680 / JCM 14380 / FERM P-15431 / SF-1)).